The primary structure comprises 875 residues: Ectonucleotide pyrophosphatase/phosphodiesterase family member 3 (875 aa).

The Cytoplasmic segment spans residues 1 to 11 (MDSRLALATEE). The helical; Signal-anchor for type II membrane protein transmembrane segment at 12–30 (PIKKDSLKRYKILCAVLLA) threads the bilayer. The Extracellular portion of the chain corresponds to 31–875 (LLVIVSLGLG…TYLPTFETII (845 aa)). SMB domains are found at residues 51-94 (HIGS…VKST) and 95-139 (QIWT…GEVP). 10 disulfide bridges follow: C55–C72, C59–C90, C70–C83, C76–C82, C99–C116, C104–C134, C114–C127, C120–C126, C145–C191, and C153–C365. A Cell attachment site motif is present at residues 79–81 (RGD). Residues 161-545 (PVILFSMDGF…HGSLNHLLKA (385 aa)) form a phosphodiesterase region. D168 serves as a coordination point for Zn(2+). K205 contributes to the ATP binding site. A Zn(2+)-binding site is contributed by T206. Residue T206 is the Nucleophile of the active site. Position 227 (N227) interacts with ATP. An N-linked (GlcNAc...) asparagine glycan is attached at N237. D276 contributes to the ATP binding site. Residues N280 and N289 are each glycosylated (N-linked (GlcNAc...) asparagine). Y290 provides a ligand contact to ATP. The Zn(2+) site is built by D326, H330, D373, and H374. Intrachain disulfides connect C381-C478, C429-C818, C562-C623, C575-C679, C577-C664, and C787-C797. H483 is a binding site for Zn(2+). N-linked (GlcNAc...) asparagine glycans are attached at residues N533, N574, N594, and N702. A nuclease region spans residues 582 to 875 (TSGQEEQVNQ…TYLPTFETII (294 aa)). Positions 752, 754, 756, 758, and 760 each coordinate Ca(2+). The N-linked (GlcNAc...) asparagine glycan is linked to N789.

Belongs to the nucleotide pyrophosphatase/phosphodiesterase family. As to quaternary structure, monomer and homodimer. The cofactor is Zn(2+). Post-translationally, the N-terminal is blocked. N-glycosylated. N-glycosylation is necessary for normal transport to the cell membrane, but is not the apical targeting signal. Detected in intestinal epithelium and liver (at protein level).

It localises to the cell membrane. The protein resides in the apical cell membrane. Its subcellular location is the secreted. It catalyses the reaction Hydrolytically removes 5'-nucleotides successively from the 3'-hydroxy termini of 3'-hydroxy-terminated oligonucleotides.. The enzyme catalyses a ribonucleoside 5'-triphosphate + H2O = a ribonucleoside 5'-phosphate + diphosphate + H(+). The catalysed reaction is ATP + H2O = AMP + diphosphate + H(+). It carries out the reaction CTP + H2O = CMP + diphosphate + H(+). It catalyses the reaction GTP + H2O = GMP + diphosphate + H(+). The enzyme catalyses UTP + H2O = UMP + diphosphate + H(+). The catalysed reaction is UDP-N-acetyl-alpha-D-glucosamine + H2O = N-acetyl-alpha-D-glucosamine 1-phosphate + UMP + 2 H(+). It carries out the reaction P(1),P(3)-bis(5'-adenosyl) triphosphate + H2O = AMP + ADP + 2 H(+). It catalyses the reaction P(1),P(4)-bis(5'-adenosyl) tetraphosphate + H2O = AMP + ATP + 2 H(+). The enzyme catalyses P(1),P(5)-bis(5'-adenosyl) pentaphosphate + H2O = adenosine 5'-tetraphosphate + AMP + 2 H(+). The catalysed reaction is P(1),P(4)-bis(5'-guanosyl) tetraphosphate + H2O = GMP + GTP + 2 H(+). Functionally, hydrolase that metabolizes extracellular nucleotides, including ATP, GTP, UTP and CTP. Limits mast cells and basophils response during inflammation and during the chronic phases of allergic responses by eliminating extracellular ATP, a signaling molecule activating these cells in an autocrine manner. Metabolizes extracellular ATP in the lumen of the small intestine, and thereby prevents ATP-induced apoptosis of intestinal plasmacytoid dendritic cells. Has a broad specificity and can also hydrolyze UDP-GlcNAc into UMP and GlcNAc-1-phosphate and potentially several other intracellular nucleotide sugars, including UDP-GalNAc, CMP-NeuAc, GDP-Fuc, and UDP-GlcA. Thereby, could modulate glycan biosynthesis and protein glycosylation. Can hydrolyze extracellular dinucleoside polyphosphates, including the vasoactive adenosine polyphosphates as well. In addition, displays an alkaline phosphodiesterase activity in vitro. The sequence is that of Ectonucleotide pyrophosphatase/phosphodiesterase family member 3 from Rattus norvegicus (Rat).